A 200-amino-acid chain; its full sequence is ATP synthase subunit b (200 aa).

The helical transmembrane segment at 12-32 threads the bilayer; it reads ILSGLAVAVAILVPVLALASG.

The protein belongs to the ATPase B chain family. In terms of assembly, F-type ATPases have 2 components, F(1) - the catalytic core - and F(0) - the membrane proton channel. F(1) has five subunits: alpha(3), beta(3), gamma(1), delta(1), epsilon(1). F(0) has three main subunits: a(1), b(2) and c(10-14). The alpha and beta chains form an alternating ring which encloses part of the gamma chain. F(1) is attached to F(0) by a central stalk formed by the gamma and epsilon chains, while a peripheral stalk is formed by the delta and b chains.

Its subcellular location is the cell inner membrane. Functionally, f(1)F(0) ATP synthase produces ATP from ADP in the presence of a proton or sodium gradient. F-type ATPases consist of two structural domains, F(1) containing the extramembraneous catalytic core and F(0) containing the membrane proton channel, linked together by a central stalk and a peripheral stalk. During catalysis, ATP synthesis in the catalytic domain of F(1) is coupled via a rotary mechanism of the central stalk subunits to proton translocation. In terms of biological role, component of the F(0) channel, it forms part of the peripheral stalk, linking F(1) to F(0). This Trichlorobacter lovleyi (strain ATCC BAA-1151 / DSM 17278 / SZ) (Geobacter lovleyi) protein is ATP synthase subunit b.